The following is a 124-amino-acid chain: Urease subunit beta (124 aa).

The protein belongs to the urease beta subunit family. As to quaternary structure, heterotrimer of UreA (gamma), UreB (beta) and UreC (alpha) subunits. Three heterotrimers associate to form the active enzyme.

Its subcellular location is the cytoplasm. The catalysed reaction is urea + 2 H2O + H(+) = hydrogencarbonate + 2 NH4(+). It participates in nitrogen metabolism; urea degradation; CO(2) and NH(3) from urea (urease route): step 1/1. The polypeptide is Urease subunit beta (Halalkalibacterium halodurans (strain ATCC BAA-125 / DSM 18197 / FERM 7344 / JCM 9153 / C-125) (Bacillus halodurans)).